The chain runs to 580 residues: MSCSWMIPVFAILAFVASAAQADVVEHTFNVATLSLPRICQPGNTSVTAVNGRVPGPQVEAREGDTVVIHVINDSPYNVTVHWHGVFQRGTPWADGPAMVTQCPIRPGHRYTYRFAVAGQEGTLWWHAHSSYMRATVYGALVIRPRRAGGYPFPTPYEEKTVLLGEWWNGDPVALESQSFSTGIPAPNADAYTINGMPGDSYLCPETTNRIAKFEVRRDKTYLLRIINAALNTAFFFKVAGHTFTVVAADASYTEPYATDVIVIAPGQTVDALMAADASPGCYHMAISSYQSAIPFPPRPAGFNGNTSTAIVEYVDATATTDAGSPVLPVMPKPNDTYTANQFYTSLTALIRPGRRTVPLTVDTRMLVTVGLGFSSCQPEQTQCNRSAPVVLANMNNVSFALPNTVSMLEALYRNTADGVYTRDFPDQPPVAFDYTSRGLLGNSPLASTGSPSTKVKTLRYNATVEMVLQNTALVGLESHPMHLHGFNFFVVAQGFGNNDGEAAGAGEFNLVNPQERNTVAVPTGGWAVIRFVADNPGMWAMHCHIDSHFAIGLAMVFEVESGPTPGTTLPPPPPDLPQC.

The signal sequence occupies residues 1-22 (MSCSWMIPVFAILAFVASAAQA). 2 consecutive Plastocyanin-like domains span residues 30–148 (NVAT…PRRA) and 158–317 (EEKT…YVDA). 2 N-linked (GlcNAc...) asparagine glycosylation sites follow: Asn-44 and Asn-78. Residues His-82, His-84, His-127, and His-129 each coordinate Cu cation. N-linked (GlcNAc...) asparagine glycans are attached at residues Asn-306, Asn-335, Asn-385, Asn-397, and Asn-462. Residues 424–564 (DFPDQPPVAF…AMVFEVESGP (141 aa)) enclose the Plastocyanin-like 3 domain. Residues His-480, His-483, His-485, His-543, Cys-544, His-545, and His-549 each coordinate Cu cation.

Belongs to the multicopper oxidase family. Requires Cu cation as cofactor.

Its subcellular location is the secreted. The protein localises to the extracellular space. It localises to the apoplast. The catalysed reaction is 4 hydroquinone + O2 = 4 benzosemiquinone + 2 H2O. Lignin degradation and detoxification of lignin-derived products. The protein is Laccase-6 (LAC6) of Oryza sativa subsp. japonica (Rice).